Here is a 245-residue protein sequence, read N- to C-terminus: Putative insertion sequence ATP-binding protein y4pL (245 aa).

106-113 (GPSGVGKS) is an ATP binding site.

Belongs to the IS21/IS1162 putative ATP-binding protein family.

The polypeptide is Putative insertion sequence ATP-binding protein y4pL (Sinorhizobium fredii (strain NBRC 101917 / NGR234)).